Here is a 652-residue protein sequence, read N- to C-terminus: DNA ligase (652 aa).

Residues 29–33 (DQEYD), 78–79 (SL), and Glu-107 each bind NAD(+). Lys-109 acts as the N6-AMP-lysine intermediate in catalysis. The NAD(+) site is built by Arg-130, Glu-164, Lys-278, and Lys-302. Residues Cys-395, Cys-398, Cys-413, and Cys-418 each coordinate Zn(2+). In terms of domain architecture, BRCT spans 577 to 652 (DTSAQLFGLT…VKDENWLLQL (76 aa)).

It belongs to the NAD-dependent DNA ligase family. LigA subfamily. Mg(2+) serves as cofactor. Mn(2+) is required as a cofactor.

The catalysed reaction is NAD(+) + (deoxyribonucleotide)n-3'-hydroxyl + 5'-phospho-(deoxyribonucleotide)m = (deoxyribonucleotide)n+m + AMP + beta-nicotinamide D-nucleotide.. Its function is as follows. DNA ligase that catalyzes the formation of phosphodiester linkages between 5'-phosphoryl and 3'-hydroxyl groups in double-stranded DNA using NAD as a coenzyme and as the energy source for the reaction. It is essential for DNA replication and repair of damaged DNA. The polypeptide is DNA ligase (Streptococcus uberis (strain ATCC BAA-854 / 0140J)).